A 168-amino-acid chain; its full sequence is G/U mismatch-specific DNA glycosylase (168 aa).

The protein belongs to the uracil-DNA glycosylase (UDG) superfamily. TDG/mug family. As to quaternary structure, binds DNA as a monomer.

It localises to the cytoplasm. It carries out the reaction Specifically hydrolyzes mismatched double-stranded DNA and polynucleotides, releasing free uracil.. Its function is as follows. Excises ethenocytosine and uracil, which can arise by alkylation or deamination of cytosine, respectively, from the corresponding mispairs with guanine in ds-DNA. It is capable of hydrolyzing the carbon-nitrogen bond between the sugar-phosphate backbone of the DNA and the mispaired base. The complementary strand guanine functions in substrate recognition. Required for DNA damage lesion repair in stationary-phase cells. The protein is G/U mismatch-specific DNA glycosylase of Salmonella gallinarum (strain 287/91 / NCTC 13346).